We begin with the raw amino-acid sequence, 270 residues long: Ribosomal RNA small subunit methyltransferase A (270 aa).

Residues His-11, Leu-13, Gly-38, Glu-59, Asp-84, and Asn-109 each contribute to the S-adenosyl-L-methionine site.

It belongs to the class I-like SAM-binding methyltransferase superfamily. rRNA adenine N(6)-methyltransferase family. RsmA subfamily.

It is found in the cytoplasm. The enzyme catalyses adenosine(1518)/adenosine(1519) in 16S rRNA + 4 S-adenosyl-L-methionine = N(6)-dimethyladenosine(1518)/N(6)-dimethyladenosine(1519) in 16S rRNA + 4 S-adenosyl-L-homocysteine + 4 H(+). Specifically dimethylates two adjacent adenosines (A1518 and A1519) in the loop of a conserved hairpin near the 3'-end of 16S rRNA in the 30S particle. May play a critical role in biogenesis of 30S subunits. In Crocosphaera subtropica (strain ATCC 51142 / BH68) (Cyanothece sp. (strain ATCC 51142)), this protein is Ribosomal RNA small subunit methyltransferase A.